The primary structure comprises 445 residues: Response regulator protein PilR (445 aa).

The Response regulatory domain occupies 5–119; the sequence is KALIVDDEPD…RLRELVATAL (115 aa). 4-aspartylphosphate occurs at positions 11 and 54. One can recognise a Sigma-54 factor interaction domain in the interval 135 to 364; that stretch reads LLGESPPMRA…LENMLERAYT (230 aa). ATP-binding positions include 163–170 and 226–235; these read GESGSGKE and ASGGTLFLDE. Positions 418–437 form a DNA-binding region, H-T-H motif; that stretch reads RWNRTAAAQRLGLTFRSMRY.

Phosphorylated by PilS.

It localises to the cytoplasm. Functionally, member of the two-component regulatory system PilS/PilR that regulates the expression of multiple genes including the type IV pilus (T4P) major subunit PilA. Thereby, plays a major role in the regulation of multiple motility pathways. Upon appropriate environmental signals, the histidine kinase PilS transfers the phosphoryl group onto PilR. In turn, PilR functions as a transcriptional activator by direct binding to a cis-acting sequence upstream of the pilin gene promoter leading to its activation. The chain is Response regulator protein PilR (pilR) from Pseudomonas aeruginosa (strain ATCC 15692 / DSM 22644 / CIP 104116 / JCM 14847 / LMG 12228 / 1C / PRS 101 / PAO1).